A 1698-amino-acid polypeptide reads, in one-letter code: Protein 4.1 homolog (1698 aa).

Positions 1–31 are disordered; the sequence is MPAEIKPSAPAEPETPTKSKPKSSSSSHGKP. Residues 12–27 show a composition bias toward low complexity; the sequence is EPETPTKSKPKSSSSS. The 283-residue stretch at 32–314 folds into the FERM domain; the sequence is ALARVTLLDG…EHHTFFRLMT (283 aa). Residues 317–434 are hydrophilic; sequence PVSKSKMFPV…KEEKERKERE (118 aa). 2 disordered regions span residues 335 to 361 and 374 to 710; these read GRTQAESTNTPVDRTPPKFNRTLSGAR and EKEK…SDPT. Residues 374 to 448 show a composition bias toward basic and acidic residues; the sequence is EKEKVARKSS…EEKKKAEKAA (75 aa). A compositionally biased stretch (low complexity) spans 449–461; that stretch reads KAALAAGAAAGAA. Residues Ser471, Ser474, and Ser478 each carry the phosphoserine modification. A compositionally biased stretch (basic and acidic residues) spans 499-514; sequence KDGKDKSGKDKDKEVG. Over residues 562–571 the composition is skewed to polar residues; sequence DGNTSPTRKS. Ser566 carries the phosphoserine modification. Over residues 579-589 the composition is skewed to basic and acidic residues; it reads YDQDPNSRKSG. Polar residues predominate over residues 594–603; that stretch reads EQLSPTSQQK. A compositionally biased stretch (basic and acidic residues) spans 618 to 627; the sequence is ALKETAEKLK. 2 positions are modified to phosphoserine: Ser659 and Ser687. A compositionally biased stretch (polar residues) spans 684–696; the sequence is RSYSPTKGPQGYS. A Phosphothreonine modification is found at Thr689. Residues Ser697, Ser1398, Ser1401, and Ser1402 each carry the phosphoserine modification. The interval 1286 to 1698 is C-terminal (CTD); that stretch reads GEIVQVDPND…EKIEIQQQTQ (413 aa). At Thr1407 the chain carries Phosphothreonine. Positions 1509 to 1532 are enriched in basic and acidic residues; sequence LGKNAKTEQLEEKTVATTRTHDPN. Positions 1509–1599 are disordered; it reads LGKNAKTEQL…SPLFTTSATT (91 aa). Polar residues predominate over residues 1533–1554; that stretch reads KQQQRVVTQEVKTTATVTSGDQ. A compositionally biased stretch (low complexity) spans 1561 to 1571; sequence VSSTSSGDSGT. Residues 1584–1599 are compositionally biased toward polar residues; the sequence is RTDNQKSPLFTTSATT. Ser1590 bears the Phosphoserine mark.

In terms of tissue distribution, at onset of germ band retraction, expression is seen in epidermis, hindgut and foregut. During retraction, expression extends to tracheal branches and salivary glands.

The protein localises to the cell junction. Its subcellular location is the septate junction. Its function is as follows. An integral component of the septate junction. May play a role in cell-cell interactions that are necessary for proper development. Vital for embryonic development. The sequence is that of Protein 4.1 homolog (cora) from Drosophila melanogaster (Fruit fly).